We begin with the raw amino-acid sequence, 750 residues long: Photosystem I P700 chlorophyll a apoprotein A1 (750 aa).

8 helical membrane passes run 70–93, 156–179, 195–219, 291–309, 346–369, 385–411, 433–455, and 531–549; these read VFSA…FHGA, LYCT…FHYH, LNHH…HVSL, IAHH…GHMY, WHAQ…HHMY, LSLF…IFMV, AIIS…LYIH, and FLVH…LILL. Residues cysteine 573 and cysteine 582 each coordinate [4Fe-4S] cluster. 2 consecutive transmembrane segments (helical) span residues 589-610 and 664-686; these read HVFL…HFSW and LSAY…MFLF. Histidine 675 serves as a coordination point for chlorophyll a'. Chlorophyll a contacts are provided by methionine 683 and tyrosine 691. A phylloquinone-binding site is contributed by tryptophan 692. The helical transmembrane segment at 724–744 threads the bilayer; it reads AVGVTHYLLGGIATTWAFFLA.

It belongs to the PsaA/PsaB family. In terms of assembly, the PsaA/B heterodimer binds the P700 chlorophyll special pair and subsequent electron acceptors. PSI consists of a core antenna complex that captures photons, and an electron transfer chain that converts photonic excitation into a charge separation. The eukaryotic PSI reaction center is composed of at least 11 subunits. The cofactor is P700 is a chlorophyll a/chlorophyll a' dimer, A0 is one or more chlorophyll a, A1 is one or both phylloquinones and FX is a shared 4Fe-4S iron-sulfur center..

The protein resides in the plastid. Its subcellular location is the chloroplast thylakoid membrane. The enzyme catalyses reduced [plastocyanin] + hnu + oxidized [2Fe-2S]-[ferredoxin] = oxidized [plastocyanin] + reduced [2Fe-2S]-[ferredoxin]. PsaA and PsaB bind P700, the primary electron donor of photosystem I (PSI), as well as the electron acceptors A0, A1 and FX. PSI is a plastocyanin-ferredoxin oxidoreductase, converting photonic excitation into a charge separation, which transfers an electron from the donor P700 chlorophyll pair to the spectroscopically characterized acceptors A0, A1, FX, FA and FB in turn. Oxidized P700 is reduced on the lumenal side of the thylakoid membrane by plastocyanin. In Vitis vinifera (Grape), this protein is Photosystem I P700 chlorophyll a apoprotein A1.